The chain runs to 177 residues: Nicotinamide-nucleotide adenylyltransferase (177 aa).

Belongs to the archaeal NMN adenylyltransferase family.

Its subcellular location is the cytoplasm. The enzyme catalyses beta-nicotinamide D-ribonucleotide + ATP + H(+) = diphosphate + NAD(+). It participates in cofactor biosynthesis; NAD(+) biosynthesis; NAD(+) from nicotinamide D-ribonucleotide: step 1/1. The chain is Nicotinamide-nucleotide adenylyltransferase from Halobacterium salinarum (strain ATCC 29341 / DSM 671 / R1).